Here is a 262-residue protein sequence, read N- to C-terminus: Pyridoxine 5'-phosphate synthase (262 aa).

Asn-6 contacts 3-amino-2-oxopropyl phosphate. Position 8–9 (8–9) interacts with 1-deoxy-D-xylulose 5-phosphate; that stretch reads DH. Residue Arg-17 participates in 3-amino-2-oxopropyl phosphate binding. His-43 acts as the Proton acceptor in catalysis. Residues Arg-45 and His-50 each contribute to the 1-deoxy-D-xylulose 5-phosphate site. Glu-70 acts as the Proton acceptor in catalysis. Thr-102 serves as a coordination point for 1-deoxy-D-xylulose 5-phosphate. The active-site Proton donor is the His-215. 3-amino-2-oxopropyl phosphate is bound by residues Gly-216 and 237-238; that span reads GH.

The protein belongs to the PNP synthase family. As to quaternary structure, homooctamer; tetramer of dimers.

It is found in the cytoplasm. It carries out the reaction 3-amino-2-oxopropyl phosphate + 1-deoxy-D-xylulose 5-phosphate = pyridoxine 5'-phosphate + phosphate + 2 H2O + H(+). The protein operates within cofactor biosynthesis; pyridoxine 5'-phosphate biosynthesis; pyridoxine 5'-phosphate from D-erythrose 4-phosphate: step 5/5. Its function is as follows. Catalyzes the complicated ring closure reaction between the two acyclic compounds 1-deoxy-D-xylulose-5-phosphate (DXP) and 3-amino-2-oxopropyl phosphate (1-amino-acetone-3-phosphate or AAP) to form pyridoxine 5'-phosphate (PNP) and inorganic phosphate. This is Pyridoxine 5'-phosphate synthase from Helicobacter pylori (strain HPAG1).